A 228-amino-acid polypeptide reads, in one-letter code: Phosphatidylserine decarboxylase proenzyme (228 aa).

Serine 197 functions as the Schiff-base intermediate with substrate; via pyruvic acid in the catalytic mechanism. Residue serine 197 is modified to Pyruvic acid (Ser); by autocatalysis.

Belongs to the phosphatidylserine decarboxylase family. PSD-A subfamily. In terms of assembly, heterodimer of a large membrane-associated beta subunit and a small pyruvoyl-containing alpha subunit. It depends on pyruvate as a cofactor. Post-translationally, is synthesized initially as an inactive proenzyme. Formation of the active enzyme involves a self-maturation process in which the active site pyruvoyl group is generated from an internal serine residue via an autocatalytic post-translational modification. Two non-identical subunits are generated from the proenzyme in this reaction, and the pyruvate is formed at the N-terminus of the alpha chain, which is derived from the carboxyl end of the proenzyme. The post-translation cleavage follows an unusual pathway, termed non-hydrolytic serinolysis, in which the side chain hydroxyl group of the serine supplies its oxygen atom to form the C-terminus of the beta chain, while the remainder of the serine residue undergoes an oxidative deamination to produce ammonia and the pyruvoyl prosthetic group on the alpha chain.

It is found in the cell membrane. It carries out the reaction a 1,2-diacyl-sn-glycero-3-phospho-L-serine + H(+) = a 1,2-diacyl-sn-glycero-3-phosphoethanolamine + CO2. It functions in the pathway phospholipid metabolism; phosphatidylethanolamine biosynthesis; phosphatidylethanolamine from CDP-diacylglycerol: step 2/2. Its function is as follows. Catalyzes the formation of phosphatidylethanolamine (PtdEtn) from phosphatidylserine (PtdSer). The polypeptide is Phosphatidylserine decarboxylase proenzyme (Phocaeicola vulgatus (strain ATCC 8482 / DSM 1447 / JCM 5826 / CCUG 4940 / NBRC 14291 / NCTC 11154) (Bacteroides vulgatus)).